The sequence spans 90 residues: Small ribosomal subunit protein uS15c (90 aa).

This sequence belongs to the universal ribosomal protein uS15 family. As to quaternary structure, part of the 30S ribosomal subunit.

It is found in the plastid. Its subcellular location is the chloroplast. The chain is Small ribosomal subunit protein uS15c (rps15-A) from Oryza nivara (Indian wild rice).